Here is a 1154-residue protein sequence, read N- to C-terminus: ATP-dependent helicase/deoxyribonuclease subunit B (1154 aa).

Positions 1 to 284 (MSVRFIIGRS…EQLRHNVRHK (284 aa)) constitute a UvrD-like helicase ATP-binding domain. 8–15 (GRSGSGKT) contributes to the ATP binding site. Positions 279-583 (HNVRHKHEEL…QFSLVPPATD (305 aa)) constitute a UvrD-like helicase C-terminal domain. [4Fe-4S] cluster is bound by residues cysteine 799, cysteine 1120, cysteine 1123, and cysteine 1129.

This sequence belongs to the helicase family. AddB/RexB type 1 subfamily. Heterodimer of AddA and AddB. Mg(2+) is required as a cofactor. Requires [4Fe-4S] cluster as cofactor.

In terms of biological role, the heterodimer acts as both an ATP-dependent DNA helicase and an ATP-dependent, dual-direction single-stranded exonuclease. Recognizes the chi site generating a DNA molecule suitable for the initiation of homologous recombination. The AddB subunit has 5' -&gt; 3' nuclease activity but not helicase activity. The chain is ATP-dependent helicase/deoxyribonuclease subunit B from Anoxybacillus flavithermus (strain DSM 21510 / WK1).